The following is a 277-amino-acid chain: Phosphatidylglycerol--prolipoprotein diacylglyceryl transferase (277 aa).

The next 7 helical transmembrane spans lie at 21–41 (LAVRWYGLMYLFGFMFALWLA), 60–80 (LLFAGFLGVVIGGRVGYVLFY), 95–115 (VWTGGMSFHGGLLGVISAMLW), 124–144 (FFTIADFVAPLVPFGLGAGRL), 176–196 (SQLYEFALEGVVLFLILNWFI), 203–223 (GTVSGLFLFGYGTFRFLVEYV), and 239–259 (MGQILSLPMVIGGLLMMLWAF). R143 lines the a 1,2-diacyl-sn-glycero-3-phospho-(1'-sn-glycerol) pocket.

This sequence belongs to the Lgt family.

The protein resides in the cell inner membrane. It catalyses the reaction L-cysteinyl-[prolipoprotein] + a 1,2-diacyl-sn-glycero-3-phospho-(1'-sn-glycerol) = an S-1,2-diacyl-sn-glyceryl-L-cysteinyl-[prolipoprotein] + sn-glycerol 1-phosphate + H(+). The protein operates within protein modification; lipoprotein biosynthesis (diacylglyceryl transfer). In terms of biological role, catalyzes the transfer of the diacylglyceryl group from phosphatidylglycerol to the sulfhydryl group of the N-terminal cysteine of a prolipoprotein, the first step in the formation of mature lipoproteins. This chain is Phosphatidylglycerol--prolipoprotein diacylglyceryl transferase, found in Aliivibrio fischeri (strain ATCC 700601 / ES114) (Vibrio fischeri).